A 329-amino-acid chain; its full sequence is DNA-directed RNA polymerase subunit alpha (329 aa).

The interval 1–235 (MQGSVTEFLK…EQLDAFVDLR (235 aa)) is alpha N-terminal domain (alpha-NTD). Positions 249–329 (FDPILLRPVD…NWPPASIAED (81 aa)) are alpha C-terminal domain (alpha-CTD).

Belongs to the RNA polymerase alpha chain family. Homodimer. The RNAP catalytic core consists of 2 alpha, 1 beta, 1 beta' and 1 omega subunit. When a sigma factor is associated with the core the holoenzyme is formed, which can initiate transcription.

It catalyses the reaction RNA(n) + a ribonucleoside 5'-triphosphate = RNA(n+1) + diphosphate. In terms of biological role, DNA-dependent RNA polymerase catalyzes the transcription of DNA into RNA using the four ribonucleoside triphosphates as substrates. In Pasteurella multocida (strain Pm70), this protein is DNA-directed RNA polymerase subunit alpha.